Here is an 86-residue protein sequence, read N- to C-terminus: MGYGCRNKYTGVHLAGSCKQIKTYQVGIQRNIIWVITSFFLISSSFSRNGSLNSSAYFIFLFFNIVTKFIKIESCFLFYAVRKVAN.

Its subcellular location is the mitochondrion. This is an uncharacterized protein from Marchantia polymorpha (Common liverwort).